The following is a 132-amino-acid chain: Large ribosomal subunit protein bL12 (132 aa).

It belongs to the bacterial ribosomal protein bL12 family. Homodimer. Part of the ribosomal stalk of the 50S ribosomal subunit. Forms a multimeric L10(L12)X complex, where L10 forms an elongated spine to which 2 to 4 L12 dimers bind in a sequential fashion. Binds GTP-bound translation factors.

Functionally, forms part of the ribosomal stalk which helps the ribosome interact with GTP-bound translation factors. Is thus essential for accurate translation. The polypeptide is Large ribosomal subunit protein bL12 (Ehrlichia canis (strain Jake)).